A 57-amino-acid polypeptide reads, in one-letter code: Large ribosomal subunit protein bL32 (57 aa).

The segment covering 1-20 (MAVPKKKTSKTKRDQRKANW) has biased composition (basic residues). The segment at 1-21 (MAVPKKKTSKTKRDQRKANWK) is disordered.

This sequence belongs to the bacterial ribosomal protein bL32 family.

The chain is Large ribosomal subunit protein bL32 from Rippkaea orientalis (strain PCC 8801 / RF-1) (Cyanothece sp. (strain PCC 8801)).